The chain runs to 146 residues: 3-dehydroquinate dehydratase (146 aa).

The active-site Proton acceptor is Y23. Positions 79, 85, and 92 each coordinate substrate. The active-site Proton donor is the H105. Substrate contacts are provided by residues 106-107 (IS) and R116.

Belongs to the type-II 3-dehydroquinase family. In terms of assembly, homododecamer.

The catalysed reaction is 3-dehydroquinate = 3-dehydroshikimate + H2O. It functions in the pathway metabolic intermediate biosynthesis; chorismate biosynthesis; chorismate from D-erythrose 4-phosphate and phosphoenolpyruvate: step 3/7. Catalyzes a trans-dehydration via an enolate intermediate. This chain is 3-dehydroquinate dehydratase, found in Variovorax paradoxus (strain S110).